Consider the following 451-residue polypeptide: C4-dicarboxylate transport protein (451 aa).

The next 9 helical transmembrane spans lie at S17 to P37, L53 to M73, L85 to V105, A153 to L173, V193 to M213, L231 to A251, G306 to A326, I339 to G359, and I361 to I381.

Belongs to the dicarboxylate/amino acid:cation symporter (DAACS) (TC 2.A.23) family.

It localises to the cell inner membrane. Its function is as follows. Responsible for the transport of dicarboxylates such as succinate, fumarate, and malate from the periplasm across the membrane. This chain is C4-dicarboxylate transport protein, found in Paracidovorax citrulli (strain AAC00-1) (Acidovorax citrulli).